The chain runs to 450 residues: Phosphoglucosamine mutase (450 aa).

S102 serves as the catalytic Phosphoserine intermediate. Positions 102, 243, 245, and 247 each coordinate Mg(2+). The residue at position 102 (S102) is a Phosphoserine.

Belongs to the phosphohexose mutase family. Mg(2+) serves as cofactor. Activated by phosphorylation.

It catalyses the reaction alpha-D-glucosamine 1-phosphate = D-glucosamine 6-phosphate. In terms of biological role, catalyzes the conversion of glucosamine-6-phosphate to glucosamine-1-phosphate. This is Phosphoglucosamine mutase from Rhizobium etli (strain CIAT 652).